The sequence spans 274 residues: Large ribosomal subunit protein uL2 (274 aa).

2 disordered regions span residues 37–59 (KAKN…GGHK) and 222–262 (GAAM…RTNK). A compositionally biased stretch (basic residues) spans 50–59 (TTRHKGGGHK).

The protein belongs to the universal ribosomal protein uL2 family. Part of the 50S ribosomal subunit. Forms a bridge to the 30S subunit in the 70S ribosome.

Its function is as follows. One of the primary rRNA binding proteins. Required for association of the 30S and 50S subunits to form the 70S ribosome, for tRNA binding and peptide bond formation. It has been suggested to have peptidyltransferase activity; this is somewhat controversial. Makes several contacts with the 16S rRNA in the 70S ribosome. The sequence is that of Large ribosomal subunit protein uL2 from Alcanivorax borkumensis (strain ATCC 700651 / DSM 11573 / NCIMB 13689 / SK2).